The chain runs to 111 residues: Protein RnfH (111 aa).

Residues 88–111 form a disordered region; sequence RRRRVQKTRESGTREGQKWLRGGA. Residues 94 to 105 show a composition bias toward basic and acidic residues; sequence KTRESGTREGQK.

Belongs to the UPF0125 (RnfH) family.

The sequence is that of Protein RnfH from Cupriavidus pinatubonensis (strain JMP 134 / LMG 1197) (Cupriavidus necator (strain JMP 134)).